A 170-amino-acid chain; its full sequence is ATP synthase subunit b (170 aa).

A helical transmembrane segment spans residues 11-31; sequence AFTFGDAFFTLFAFAILLVLI.

The protein belongs to the ATPase B chain family. In terms of assembly, F-type ATPases have 2 components, F(1) - the catalytic core - and F(0) - the membrane proton channel. F(1) has five subunits: alpha(3), beta(3), gamma(1), delta(1), epsilon(1). F(0) has three main subunits: a(1), b(2) and c(10-14). The alpha and beta chains form an alternating ring which encloses part of the gamma chain. F(1) is attached to F(0) by a central stalk formed by the gamma and epsilon chains, while a peripheral stalk is formed by the delta and b chains.

It is found in the cell membrane. Functionally, f(1)F(0) ATP synthase produces ATP from ADP in the presence of a proton or sodium gradient. F-type ATPases consist of two structural domains, F(1) containing the extramembraneous catalytic core and F(0) containing the membrane proton channel, linked together by a central stalk and a peripheral stalk. During catalysis, ATP synthesis in the catalytic domain of F(1) is coupled via a rotary mechanism of the central stalk subunits to proton translocation. In terms of biological role, component of the F(0) channel, it forms part of the peripheral stalk, linking F(1) to F(0). This chain is ATP synthase subunit b, found in Listeria monocytogenes serotype 4b (strain F2365).